The chain runs to 599 residues: Aspartate--tRNA(Asp/Asn) ligase (599 aa).

E180 is an L-aspartate binding site. The segment at 204–207 is aspartate; the sequence is QLLK. Position 226 (R226) interacts with L-aspartate. ATP contacts are provided by residues 226-228 and Q235; that span reads RDE. Residue H457 coordinates L-aspartate. Residue E491 coordinates ATP. Residue R498 coordinates L-aspartate. Position 543-546 (543-546) interacts with ATP; the sequence is GWDR. The segment at 565 to 599 is disordered; it reads KAGGGRDPLTGAPAPISDEQRAETGVDYDPDADEN. The span at 590-599 shows a compositional bias: acidic residues; sequence VDYDPDADEN.

This sequence belongs to the class-II aminoacyl-tRNA synthetase family. Type 1 subfamily. Homodimer.

Its subcellular location is the cytoplasm. The catalysed reaction is tRNA(Asx) + L-aspartate + ATP = L-aspartyl-tRNA(Asx) + AMP + diphosphate. Functionally, aspartyl-tRNA synthetase with relaxed tRNA specificity since it is able to aspartylate not only its cognate tRNA(Asp) but also tRNA(Asn). Reaction proceeds in two steps: L-aspartate is first activated by ATP to form Asp-AMP and then transferred to the acceptor end of tRNA(Asp/Asn). The chain is Aspartate--tRNA(Asp/Asn) ligase from Bifidobacterium longum (strain DJO10A).